A 650-amino-acid polypeptide reads, in one-letter code: NAC domain-containing protein 54 (650 aa).

In terms of domain architecture, NAC spans 6–156 (LPPGFRFHPT…AYALCRVFKK (151 aa)). A DNA-binding region spans residues 105–162 (VGMKKTLVYYRGRAPHGSRTDWVMHEYRLDERECETDTGLQDAYALCRVFKKTAPGPK).

Expressed in leaves, roots and flowers.

The protein localises to the nucleus. In terms of biological role, transcription factor that functions as a regulator of the jasmonate (JA) signaling pathway. May regulate the expression of genes encoding JA biosynthetic enzymes, such as lipoxygenase 7 (CM-LOX1), allene oxide synthase 2 (AOS2) and OPDA reductase 7 (OPR7). Involved in abscisic acid-induced leaf senescence. Activates the abscisic acid (ABA) signaling-associated gene ABI5 and the senescence-associated gene NYC1 by directly binding to the mitochondrial dysfunction motif (MDM) present in their promoters. Possesses transcriptional activator activity in yeast. Required for the multiplication of the rice dwarf virus (RDV). The chain is NAC domain-containing protein 54 from Oryza sativa subsp. japonica (Rice).